Consider the following 553-residue polypeptide: MQATIKRYPTSPISGQTLGTSGLRKRASEVENTPNYLENFVNAMFNAASNLQKPGKIIIGGDGRYLNLKALDIIIRVALSRGFTDIVVGKSGFMSTPAESATIIRRKAEAGFIMTASHNPAGKEHGDFGLKLNMSNGGPAPIEVTSKIEESARNIKEIVIAELNKPLNIDSVGDIEIECEGKKAVVHVIDPLEDYIAYLHECFDFENLKQFVSKYHLKVQVDGFNAVTGIYNKKVFCELLGLPESSLKNAIPMPDFGGKHPDPNLTYAAELVHAVIPEDSPYDIGFAFDGDGDRNLIVGRGAFVSPSDSLAILSTKYNDIPFFVKNGFKGVARSMPTSAAVDHVTSITETPTGWKFFGNLMDSGKISLCGEESFGTGCCGIREKDGIWAALCWVSILAAESERAQRLVGVKEILESHWAKYGRNYYQRYDFDEVDKKAAEDMMQMMRDNAKTVKCDLNGVPLKFCDDFEYHDSVDGSVTSKQGIRFVFEDGSRIIFRLSGTGSVGATIRVYFDKYSKDYKADQTKVLADMVTVAYAVSQITKFTGREKPSVVT.

A disordered region spans residues 1–25 (MQATIKRYPTSPISGQTLGTSGLRK). Residues 11–20 (SPISGQTLGT) show a composition bias toward polar residues. Residues T20, R24, 117 to 118 (SH), and K131 each bind substrate. Catalysis depends on S117, which acts as the Phosphoserine intermediate. Mg(2+) is bound at residue S117. Residues D289, D291, and D293 each contribute to the Mg(2+) site. Residues 293–294 (DR), T352, 371–373 (EES), K384, and R509 contribute to the substrate site.

The protein belongs to the phosphohexose mutase family. The cofactor is Mg(2+).

The protein localises to the cytoplasm. The enzyme catalyses alpha-D-glucose 1-phosphate = alpha-D-glucose 6-phosphate. Its function is as follows. Catalyzes the reversible conversion of glucose 1-phosphate into glucose 6-phosphate. This enzyme participates in both the breakdown and synthesis of glucose. This chain is Phosphoglucomutase, found in Entamoeba histolytica (strain ATCC 30459 / HM-1:IMSS / ABRM).